Consider the following 372-residue polypeptide: DNA replication and repair protein RecF (372 aa).

30–37 (GENAQGKT) provides a ligand contact to ATP.

Belongs to the RecF family.

The protein resides in the cytoplasm. Its function is as follows. The RecF protein is involved in DNA metabolism; it is required for DNA replication and normal SOS inducibility. RecF binds preferentially to single-stranded, linear DNA. It also seems to bind ATP. The protein is DNA replication and repair protein RecF of Geobacillus kaustophilus (strain HTA426).